The sequence spans 579 residues: Adenine deaminase (579 aa).

Belongs to the metallo-dependent hydrolases superfamily. Adenine deaminase family. It depends on Mn(2+) as a cofactor.

It catalyses the reaction adenine + H2O + H(+) = hypoxanthine + NH4(+). In Listeria monocytogenes serotype 4b (strain F2365), this protein is Adenine deaminase.